Here is a 289-residue protein sequence, read N- to C-terminus: 4-diphosphocytidyl-2-C-methyl-D-erythritol kinase (289 aa).

K10 is an active-site residue. 95–105 (PVSAGMGGGSA) serves as a coordination point for ATP. Residue D137 is part of the active site.

Belongs to the GHMP kinase family. IspE subfamily.

It catalyses the reaction 4-CDP-2-C-methyl-D-erythritol + ATP = 4-CDP-2-C-methyl-D-erythritol 2-phosphate + ADP + H(+). It functions in the pathway isoprenoid biosynthesis; isopentenyl diphosphate biosynthesis via DXP pathway; isopentenyl diphosphate from 1-deoxy-D-xylulose 5-phosphate: step 3/6. Its function is as follows. Catalyzes the phosphorylation of the position 2 hydroxy group of 4-diphosphocytidyl-2C-methyl-D-erythritol. The sequence is that of 4-diphosphocytidyl-2-C-methyl-D-erythritol kinase from Ligilactobacillus salivarius (strain UCC118) (Lactobacillus salivarius).